We begin with the raw amino-acid sequence, 275 residues long: NH(3)-dependent NAD(+) synthetase (275 aa).

50–57 contributes to the ATP binding site; that stretch reads GISGGVDS. Aspartate 56 is a binding site for Mg(2+). Arginine 147 contributes to the deamido-NAD(+) binding site. Residue threonine 167 coordinates ATP. Residue glutamate 172 participates in Mg(2+) binding. Residues lysine 180 and aspartate 187 each coordinate deamido-NAD(+). Lysine 196 and threonine 218 together coordinate ATP. A deamido-NAD(+)-binding site is contributed by 267-268; it reads HK.

The protein belongs to the NAD synthetase family. Homodimer.

It catalyses the reaction deamido-NAD(+) + NH4(+) + ATP = AMP + diphosphate + NAD(+) + H(+). It participates in cofactor biosynthesis; NAD(+) biosynthesis; NAD(+) from deamido-NAD(+) (ammonia route): step 1/1. Functionally, catalyzes the ATP-dependent amidation of deamido-NAD to form NAD. Uses ammonia as a nitrogen source. This chain is NH(3)-dependent NAD(+) synthetase, found in Pseudomonas entomophila (strain L48).